A 273-amino-acid chain; its full sequence is NADPH-dependent 7-cyano-7-deazaguanine reductase (273 aa).

80 to 82 (VES) lines the substrate pocket. An NADPH-binding site is contributed by 82 to 83 (SK). Cysteine 180 functions as the Thioimide intermediate in the catalytic mechanism. Aspartate 187 (proton donor) is an active-site residue. 219–220 (HE) lines the substrate pocket. 248-249 (RG) contributes to the NADPH binding site.

The protein belongs to the GTP cyclohydrolase I family. QueF type 2 subfamily. In terms of assembly, homodimer.

It localises to the cytoplasm. The catalysed reaction is 7-aminomethyl-7-carbaguanine + 2 NADP(+) = 7-cyano-7-deazaguanine + 2 NADPH + 3 H(+). It participates in tRNA modification; tRNA-queuosine biosynthesis. Catalyzes the NADPH-dependent reduction of 7-cyano-7-deazaguanine (preQ0) to 7-aminomethyl-7-deazaguanine (preQ1). This Bordetella parapertussis (strain 12822 / ATCC BAA-587 / NCTC 13253) protein is NADPH-dependent 7-cyano-7-deazaguanine reductase.